The following is a 218-amino-acid chain: Deoxyribose-phosphate aldolase (218 aa).

The active-site Proton donor/acceptor is the Asp89. The active-site Schiff-base intermediate with acetaldehyde is the Lys152. Lys182 functions as the Proton donor/acceptor in the catalytic mechanism.

This sequence belongs to the DeoC/FbaB aldolase family. DeoC type 1 subfamily.

It localises to the cytoplasm. It carries out the reaction 2-deoxy-D-ribose 5-phosphate = D-glyceraldehyde 3-phosphate + acetaldehyde. Its pathway is carbohydrate degradation; 2-deoxy-D-ribose 1-phosphate degradation; D-glyceraldehyde 3-phosphate and acetaldehyde from 2-deoxy-alpha-D-ribose 1-phosphate: step 2/2. Its function is as follows. Catalyzes a reversible aldol reaction between acetaldehyde and D-glyceraldehyde 3-phosphate to generate 2-deoxy-D-ribose 5-phosphate. The chain is Deoxyribose-phosphate aldolase from Kocuria rhizophila (strain ATCC 9341 / DSM 348 / NBRC 103217 / DC2201).